An 817-amino-acid chain; its full sequence is DNA-directed RNA polymerase subunit beta'' (817 aa).

Zn(2+) contacts are provided by cysteine 219, cysteine 291, cysteine 298, and cysteine 301.

It belongs to the RNA polymerase beta' chain family. RpoC2 subfamily. As to quaternary structure, in plastids the minimal PEP RNA polymerase catalytic core is composed of four subunits: alpha, beta, beta', and beta''. When a (nuclear-encoded) sigma factor is associated with the core the holoenzyme is formed, which can initiate transcription. Requires Zn(2+) as cofactor.

It is found in the plastid. It carries out the reaction RNA(n) + a ribonucleoside 5'-triphosphate = RNA(n+1) + diphosphate. In terms of biological role, DNA-dependent RNA polymerase catalyzes the transcription of DNA into RNA using the four ribonucleoside triphosphates as substrates. This Euglena longa (Euglenophycean alga) protein is DNA-directed RNA polymerase subunit beta'' (rpoC2).